A 35-amino-acid polypeptide reads, in one-letter code: uncharacterized protein (35 aa).

The helical transmembrane segment at 10–30 (LMITASFFAIFIIIVVSVLLL) threads the bilayer.

The protein localises to the membrane. This is an uncharacterized protein from Salmonella typhimurium (strain LT2 / SGSC1412 / ATCC 700720).